Reading from the N-terminus, the 197-residue chain is Recombination protein RecR (197 aa).

The C4-type zinc finger occupies 57-72 (CSVCFAITEDDPCWIC). One can recognise a Toprim domain in the interval 79–174 (GTICVVEEPQ…KVTRLAHGIP (96 aa)).

This sequence belongs to the RecR family.

Functionally, may play a role in DNA repair. It seems to be involved in an RecBC-independent recombinational process of DNA repair. It may act with RecF and RecO. In Geobacter sp. (strain M21), this protein is Recombination protein RecR.